Reading from the N-terminus, the 544-residue chain is Chromosomal replication initiator protein DnaA (544 aa).

The interval 1 to 71 (MNDFWQHCSA…ADMARDFWHT (71 aa)) is domain I, interacts with DnaA modulators. Positions 71–207 (TPIDVQFVLD…GETDSMYERS (137 aa)) are domain II. The segment covering 90-105 (AAAPAPASARPASAPG) has biased composition (low complexity). 2 disordered regions span residues 90–111 (AAAPAPASARPASAPGSMGGSA) and 180–203 (AAARRTWRPGQSAGSNGNGETDSM). The span at 191–200 (SAGSNGNGET) shows a compositional bias: polar residues. The domain III, AAA+ region stretch occupies residues 208–424 (KLNPVLTFDN…GALRKILAYS (217 aa)). Positions 252, 254, 255, and 256 each coordinate ATP. The tract at residues 425 to 544 (KFHGREITIE…LHVLEQTLKG (120 aa)) is domain IV, binds dsDNA.

The protein belongs to the DnaA family. Oligomerizes as a right-handed, spiral filament on DNA at oriC.

Its subcellular location is the cytoplasm. In terms of biological role, plays an essential role in the initiation and regulation of chromosomal replication. ATP-DnaA binds to the origin of replication (oriC) to initiate formation of the DNA replication initiation complex once per cell cycle. Binds the DnaA box (a 9 base pair repeat at the origin) and separates the double-stranded (ds)DNA. Forms a right-handed helical filament on oriC DNA; dsDNA binds to the exterior of the filament while single-stranded (ss)DNA is stabiized in the filament's interior. The ATP-DnaA-oriC complex binds and stabilizes one strand of the AT-rich DNA unwinding element (DUE), permitting loading of DNA polymerase. After initiation quickly degrades to an ADP-DnaA complex that is not apt for DNA replication. Binds acidic phospholipids. This chain is Chromosomal replication initiator protein DnaA, found in Paraburkholderia xenovorans (strain LB400).